The sequence spans 452 residues: Zinc finger protein GAI-ASSOCIATED FACTOR 1 (452 aa).

Residues 1–32 (MPVDLDNSSTVSGEASVSISSTGNQNPLPNST) are compositionally biased toward polar residues. The interval 1 to 47 (MPVDLDNSSTVSGEASVSISSTGNQNPLPNSTGKKKRNLPGMPDPES) is disordered. Serine 53 is subject to Phosphoserine. 2 C2H2-type zinc fingers span residues 63–85 (FVCE…RRGH) and 104–134 (YVCP…CRKH). The short motif at 126–133 (IKKHFCRK) is the Nuclear localization signal element. A C2H2-type 2; degenerate zinc finger spans residues 139–162 (WKCDKCSKKYAVQSDWKAHSKICG). Zn(2+) contacts are provided by cysteine 141, cysteine 144, histidine 157, cysteine 161, cysteine 168, cysteine 170, histidine 183, and cysteine 187. The CCHC-type 2; atypical zinc-finger motif lies at 166–189 (YKCDCGTLFSRRDSFITHRAFCDA). The tract at residues 176–188 (RRDSFITHRAFCD) is SHR-binding. The interval 196 to 254 (RSHHSQSKKQNPEILTRKNPVPNPVPAPVDTESAKIKSSSTLTIKQSESPKTPPEIVQE) is disordered. The span at 231-245 (IKSSSTLTIKQSESP) shows a compositional bias: polar residues.

As to quaternary structure, interacts with the DELLA proteins (e.g. GAI/RGA2, RGA, RGL1, RGL2 and RGLG3), acting as coactivators and with TPR1 and TPR4, acting as a corepressors, at the promoter of GA20OX2 gene. In terms of tissue distribution, observed in vegetative tissues. Mainly expressed in hypocotyls, petioles, shoot apices, root tips, and trichomes, and, at low levels, in leaves, stems and flowers.

The protein localises to the nucleus. Its activity is regulated as follows. Transcription activation is repressed by gibberellic acid GA(3) in the presence of TPR4. In terms of biological role, transcription factor that acts as a positive regulator of gibberellin (GA) action, homeostasis and signaling. GA converts the GAF1 complex from transcriptional activator to repressor via the degradation of DELLA proteins. The polypeptide is Zinc finger protein GAI-ASSOCIATED FACTOR 1 (Arabidopsis thaliana (Mouse-ear cress)).